We begin with the raw amino-acid sequence, 433 residues long: Nuclear hormone receptor family member nhr-98 (433 aa).

The nuclear receptor DNA-binding region spans 41–116; that stretch reads SKKCQICENP…FGMTIDNFQF (76 aa). 2 NR C4-type zinc fingers span residues 44 to 64 and 80 to 104; these read CQICENPAHGKHFGAVTCRAC and CKTENKCSFRKNGYFSCKKCRMQRC. Residues 177–433 enclose the NR LBD domain; that stretch reads ETPYQVSNVL…CSHPGIFLNA (257 aa).

It belongs to the nuclear hormone receptor family.

It is found in the nucleus. Its function is as follows. Orphan nuclear receptor. The polypeptide is Nuclear hormone receptor family member nhr-98 (nhr-98) (Caenorhabditis elegans).